A 287-amino-acid chain; its full sequence is uncharacterized protein (287 aa).

The 173-residue stretch at 115–287 folds into the ATP-grasp domain; sequence PQNFDREWNP…NLAIELLKAI (173 aa). Residues K145 and 178–188 each bind ATP; that span reads QKYITCSKGES. D248, E261, and N263 together coordinate Mg(2+). Residues D248, E261, and N263 each contribute to the Mn(2+) site.

The protein belongs to the RimK family.

This is an uncharacterized protein from Mycoplasma genitalium (strain ATCC 33530 / DSM 19775 / NCTC 10195 / G37) (Mycoplasmoides genitalium).